The sequence spans 505 residues: MEKLQYELQGYLEIDRYRKQRFLYPLLFREYIYALAHDHGLNSSIFMKPTENLGYDNDNKSSSLIVKRLITRLHQQNHLIISVNDSRFVGPNRSFYSQTISEGFAGIMEIPFSMRLVPSLERIAKYQNLRSIHSIFPFLEDKLSHLYYVSDILIPHPIHLEILLQTLRTRIRDAPSLHLLRCFLHEHHNWNSLITPKKSTSIFSKENQRLFLFLYNSHVYECESVLVFLRKQSSHLRSISSLAFLERTHFYGKIKHLVVAPRNDSQRTLPLWFFKEPLMHYVRYQGKSIMASRCTNLLMKKWKYYLVNFWQCHFHLWSQPGGIHINELSNHSFYFLGYLSGVRLMPWVIRSQMLENSFMIDTAIKRFDTIVPIFPLIGSLVKAKFCNVSGYPISKSVWADSSDSDIIARFGWICRNLSHYHSGSSKKHSLCRIKYILRLSCARTLARKHKSTVRVICKRLGSKLLEEFLTEEQEIVSFIFRGTRLRSERIWYLDIIRINGLVPHS.

This sequence belongs to the intron maturase 2 family. MatK subfamily.

It is found in the plastid. Its subcellular location is the chloroplast. Usually encoded in the trnK tRNA gene intron. Probably assists in splicing its own and other chloroplast group II introns. The chain is Maturase K from Nuphar variegata (Yellow pond lily).